Reading from the N-terminus, the 816-residue chain is Transcription factor qa-1f (816 aa).

The segment at residues 76–103 is a DNA-binding region (zn(2)-C6 fungal-type); it reads CDQCRAAREKCDGIQPACFPCVSQGRSC. Residues 184 to 202 are compositionally biased toward polar residues; sequence SGQAAQDPSEDGQSPSEDI. The segment at 184 to 235 is disordered; it reads SGQAAQDPSEDGQSPSEDINVQDAGAKTSDFPHAPHLTFSAPKSSTAETRTL.

The protein localises to the nucleus. Functionally, transcription activator; part of the qa gene cluster that mediates the catabolism of quinic acid (QA) and as such, allows the use of QA as a sole carbon source. Activates the expression of qa cluster genes by binding to a 16 base-pair consensus sequence 5'-GGRTAARYRYTTAYCC-3' present in the promoters of the target genes. Regulates its own expression. May regulate the expression of many other genes inclusing genes with products in 8 mutually connected metabolic pathways: (1) starch and sucrose metabolism; (2) glycolysis/glucanogenesis; (3) TCA Cycle; (4) butanoate metabolism; (5) pyruvate metabolism; (6) aromatic amino acid and QA metabolism; (7) valine, leucine, and isoleucine degradation; and (8) transport of sugars and amino acids. This is Transcription factor qa-1f from Neurospora crassa (strain ATCC 24698 / 74-OR23-1A / CBS 708.71 / DSM 1257 / FGSC 987).